We begin with the raw amino-acid sequence, 272 residues long: Aquaporin-11 (272 aa).

Residues 1 to 14 (MTALRALWSEMQDT) are Cytoplasmic-facing. The helical transmembrane segment at 15–35 (CTSLGLMLSVVLLAGLARVVA) threads the bilayer. Residues 36 to 47 (RQQQLHRPMAHA) lie on the Lumenal side of the membrane. Residues 48-68 (FVLEFLATLQLCCCTHELLLL) traverse the membrane as a helical segment. The Cytoplasmic portion of the chain corresponds to 69–75 (SEQEPAH). Residues 76–96 (PTWPLTLIYFFTLVHGLTLVG) form a helical membrane-spanning segment. Residues 97 to 167 (TSSNPCGVMM…NPIQVDLPKA (71 aa)) lie on the Lumenal side of the membrane. The NPC signature appears at 100 to 102 (NPC). Residues 168 to 188 (VIVEALCSFIFHSALLNFQEV) form a helical membrane-spanning segment. The Cytoplasmic segment spans residues 189–195 (RPKLRIH). The chain crosses the membrane as a helical span at residues 196–216 (LLAALITFLVYAGGSLTGAVF). Positions 217-219 (NPA) match the NPA motif. Residues 217 to 235 (NPALALSLHFKCFDEAFLQ) are Lumenal-facing. The helical transmembrane segment at 236-256 (FFIVYWLAPSLGILLMILMFS) threads the bilayer. At 257-272 (FFLPWLYNNHTINKKE) the chain is on the cytoplasmic side.

The protein belongs to the MIP/aquaporin (TC 1.A.8) family. AQP11/AQP12 subfamily. In terms of assembly, homodimer; disulfide-linked. Homotetramer. Can also form homomultimer. In terms of processing, not glycosylated. As to expression, expressed in retina specifically at retinal Mueller glial cells.

The protein localises to the endoplasmic reticulum membrane. Its subcellular location is the cytoplasmic vesicle membrane. It localises to the cell membrane. It carries out the reaction H2O(in) = H2O(out). The catalysed reaction is glycerol(in) = glycerol(out). The enzyme catalyses H2O2(out) = H2O2(in). Functionally, channel protein that facilitates the transport of water, glycerol and hydrogen peroxide across membrane of cell or organelles guaranteeing intracellular homeostasis in several organes like liver, kidney and brain. In situation of stress, participates in endoplasmic reticulum (ER) homeostasis by regulating redox homeostasis through the transport of hydrogen peroxide across the endoplasmic reticulum membrane thereby regulating the oxidative stress through the NADPH oxidase 2 pathway. Plays a role by maintaining an environment suitable for translation or protein foldings in the ER lumen namely by participating in the PKD1 glycosylation processing resulting in regulation of PKD1 membrane trafficking thereby preventing the accumulation of unfolding protein in ER. Plays a role in the proximal tubule function by regulating its endosomal acidification. May play a role in postnatal kidney development. The polypeptide is Aquaporin-11 (Equus caballus (Horse)).